The chain runs to 89 residues: MALTAEQKATIVNEYGRGENDTGSPEVQVALLSANIDGLQDHFKSNKQDHHSRRGLIRMVNQRRKLLDYLKRKDFERYQSLIQRLGLRR.

The protein belongs to the universal ribosomal protein uS15 family. Part of the 30S ribosomal subunit. Forms a bridge to the 50S subunit in the 70S ribosome, contacting the 23S rRNA.

In terms of biological role, one of the primary rRNA binding proteins, it binds directly to 16S rRNA where it helps nucleate assembly of the platform of the 30S subunit by binding and bridging several RNA helices of the 16S rRNA. Forms an intersubunit bridge (bridge B4) with the 23S rRNA of the 50S subunit in the ribosome. This chain is Small ribosomal subunit protein uS15, found in Chromohalobacter salexigens (strain ATCC BAA-138 / DSM 3043 / CIP 106854 / NCIMB 13768 / 1H11).